Consider the following 96-residue polypeptide: Small ribosomal subunit protein bS16m (96 aa).

It belongs to the bacterial ribosomal protein bS16 family. In terms of assembly, component of the mitochondrial small ribosomal subunit (mt-SSU). Mature yeast 74S mitochondrial ribosomes consist of a small (37S) and a large (54S) subunit. The 37S small subunit contains a 15S ribosomal RNA (15S mt-rRNA) and at least 32 different proteins. The 54S large subunit contains a 21S rRNA (21S mt-rRNA) and at least 45 different proteins.

It localises to the mitochondrion. Functionally, component of the mitochondrial ribosome (mitoribosome), a dedicated translation machinery responsible for the synthesis of mitochondrial genome-encoded proteins, including at least some of the essential transmembrane subunits of the mitochondrial respiratory chain. The mitoribosomes are attached to the mitochondrial inner membrane and translation products are cotranslationally integrated into the membrane. This Schizosaccharomyces pombe (strain 972 / ATCC 24843) (Fission yeast) protein is Small ribosomal subunit protein bS16m (mrps16).